Here is a 314-residue protein sequence, read N- to C-terminus: ATP synthase gamma chain (314 aa).

The protein belongs to the ATPase gamma chain family. As to quaternary structure, F-type ATPases have 2 components, CF(1) - the catalytic core - and CF(0) - the membrane proton channel. CF(1) has five subunits: alpha(3), beta(3), gamma(1), delta(1), epsilon(1). CF(0) has three main subunits: a, b and c.

It is found in the cellular thylakoid membrane. Produces ATP from ADP in the presence of a proton gradient across the membrane. The gamma chain is believed to be important in regulating ATPase activity and the flow of protons through the CF(0) complex. The sequence is that of ATP synthase gamma chain from Picosynechococcus sp. (strain ATCC 27264 / PCC 7002 / PR-6) (Agmenellum quadruplicatum).